The following is a 423-amino-acid chain: tRNA(Ile)-lysidine synthase (423 aa).

ATP is bound at residue 43-48 (SSGVDS).

Belongs to the tRNA(Ile)-lysidine synthase family.

It localises to the cytoplasm. The catalysed reaction is cytidine(34) in tRNA(Ile2) + L-lysine + ATP = lysidine(34) in tRNA(Ile2) + AMP + diphosphate + H(+). Functionally, ligates lysine onto the cytidine present at position 34 of the AUA codon-specific tRNA(Ile) that contains the anticodon CAU, in an ATP-dependent manner. Cytidine is converted to lysidine, thus changing the amino acid specificity of the tRNA from methionine to isoleucine. The chain is tRNA(Ile)-lysidine synthase from Helicobacter hepaticus (strain ATCC 51449 / 3B1).